The following is a 348-amino-acid chain: Propane 2-monooxygenase, reductase component (348 aa).

Residues 5–95 (HKINFEPVDI…DCTIELLNFD (91 aa)) form the 2Fe-2S ferredoxin-type domain. 4 residues coordinate [2Fe-2S] cluster: C39, C44, C47, and C79. Residues 105-206 (IQDVRTEVLA…TGPYGSFTLK (102 aa)) enclose the FAD-binding FR-type domain.

It belongs to the bacterial ring-hydroxylating dioxygenase ferredoxin reductase family. In terms of assembly, the propane 2-monooxygenase multicomponent enzyme system is composed of an electron transfer component and a monooxygenase component interacting with the effector protein MimD. The electron transfer component is composed of a reductase (MimB), and the monooxygenase component is formed by a large subunit (MimA) and a small subunit (MimC). It depends on FAD as a cofactor. [2Fe-2S] cluster is required as a cofactor.

Functionally, reductase component of the propane 2-monooxygenase multicomponent enzyme system which is involved in the degradation of propane via the O2-dependent hydroxylation of propane. Reductase catalyzes the transfer of electrons from NADH or NADPH to monooxygenase. The sequence is that of Propane 2-monooxygenase, reductase component from Mycolicibacterium goodii (Mycobacterium goodii).